The primary structure comprises 1035 residues: Valine--tRNA ligase (1035 aa).

Residues 45–55 carry the 'HIGH' region motif; sequence PNVTGALHLGH. Positions 253–281 form a coiled coil; that stretch reads EKLSDANEKEAVDLNKQIEALQKRREERL. Lysine 619 contributes to the ATP binding site. Residues 967 to 1035 adopt a coiled-coil conformation; the sequence is DVEAELARLE…QDILKLQSKK (69 aa).

Belongs to the class-I aminoacyl-tRNA synthetase family. ValS type 1 subfamily. Monomer.

Its subcellular location is the cytoplasm. It catalyses the reaction tRNA(Val) + L-valine + ATP = L-valyl-tRNA(Val) + AMP + diphosphate. In terms of biological role, catalyzes the attachment of valine to tRNA(Val). As ValRS can inadvertently accommodate and process structurally similar amino acids such as threonine, to avoid such errors, it has a 'posttransfer' editing activity that hydrolyzes mischarged Thr-tRNA(Val) in a tRNA-dependent manner. The polypeptide is Valine--tRNA ligase (Rhodopirellula baltica (strain DSM 10527 / NCIMB 13988 / SH1)).